The primary structure comprises 221 residues: MSANTDEFDVVIIDTGCANLSSVRFAFERLGANVLVTDDKASIKAAKRVVLPGVGSAGAAMASLTEKALVELIQGLTQPVLGVCLGMQMLTLLSKERGGQALDCQAHDCKCLGIIPTEIDELNSQTLKAEGLPLPHMGWNQLTFSNPSQVHPLFAGVEAGSYVYFVHSYRAPLSDYTLAQCRYGEDFSAAIGKDNFMGVQFHPEKSAAVGAQILGNFLKMQ.

The Glutamine amidotransferase type-1 domain maps to 9–221 (DVVIIDTGCA…QILGNFLKMQ (213 aa)). The active-site Nucleophile is Cys-84. Active-site residues include His-202 and Glu-204.

In terms of assembly, heterodimer of HisH and HisF.

Its subcellular location is the cytoplasm. The enzyme catalyses 5-[(5-phospho-1-deoxy-D-ribulos-1-ylimino)methylamino]-1-(5-phospho-beta-D-ribosyl)imidazole-4-carboxamide + L-glutamine = D-erythro-1-(imidazol-4-yl)glycerol 3-phosphate + 5-amino-1-(5-phospho-beta-D-ribosyl)imidazole-4-carboxamide + L-glutamate + H(+). It carries out the reaction L-glutamine + H2O = L-glutamate + NH4(+). The protein operates within amino-acid biosynthesis; L-histidine biosynthesis; L-histidine from 5-phospho-alpha-D-ribose 1-diphosphate: step 5/9. In terms of biological role, IGPS catalyzes the conversion of PRFAR and glutamine to IGP, AICAR and glutamate. The HisH subunit catalyzes the hydrolysis of glutamine to glutamate and ammonia as part of the synthesis of IGP and AICAR. The resulting ammonia molecule is channeled to the active site of HisF. This is Imidazole glycerol phosphate synthase subunit HisH from Shewanella oneidensis (strain ATCC 700550 / JCM 31522 / CIP 106686 / LMG 19005 / NCIMB 14063 / MR-1).